Here is a 420-residue protein sequence, read N- to C-terminus: L-rhamnose isomerase (420 aa).

Positions 264, 296, and 298 each coordinate Mn(2+).

Belongs to the rhamnose isomerase family. Mn(2+) is required as a cofactor.

The protein resides in the cytoplasm. It carries out the reaction L-rhamnopyranose = L-rhamnulose. It functions in the pathway carbohydrate degradation; L-rhamnose degradation; glycerone phosphate from L-rhamnose: step 1/3. Functionally, catalyzes the interconversion of L-rhamnose and L-rhamnulose. This Listeria monocytogenes serotype 4b (strain F2365) protein is L-rhamnose isomerase.